Consider the following 292-residue polypeptide: MAKTASAMLFLYLLLSRCLLSHAFQEFITKFPMPMMYNFPSCSSTIPSTCRNETAIADTCCFEYPGGLILHSQFWNAPYRKRSYRDFGPDDSFTIHGLWNDRCDGSWDQFCRRGSSIRSVVDILSKDSLNRGGLPITGKALLRQMSMYWKGDRGDENLWVHEYNKHGLCLNTLRPECYQRWGSVASAEDQAIYDYFRIAMNLHLKIDAYHALSRQGIKPRCDAPYDAVRMQNALADDFGREVQMQCTGNRLTGVTYYYLLRGGILSENFQPVDPTQSSSCRGKIYWIPKSGC.

The N-terminal stretch at 1-23 (MAKTASAMLFLYLLLSRCLLSHA) is a signal peptide. Cystine bridges form between Cys42–Cys61, Cys50–Cys103, Cys60–Cys177, Cys111–Cys169, and Cys246–Cys280. N-linked (GlcNAc...) asparagine glycosylation is present at Asn52. Active-site residues include His96, Glu162, and His166.

The protein belongs to the RNase T2 family.

The protein localises to the vacuole lumen. Its subcellular location is the cytoplasm. It carries out the reaction a ribonucleotidyl-ribonucleotide-RNA + H2O = a 3'-end 3'-phospho-ribonucleotide-RNA + a 5'-end dephospho-ribonucleoside-RNA + H(+). In terms of biological role, rnase which modulates cell survival under stress conditions. Released from the vacuole to the cytoplasm during stress to promote tRNA and rRNA cleavage and to activate separately a downstream pathway that promotes cell death. Involved in cell size, vacuolar morphology and growth at high temperatures and high salt concentration. The protein is Ribonuclease T2-like (RNY1) of Eremothecium gossypii (strain ATCC 10895 / CBS 109.51 / FGSC 9923 / NRRL Y-1056) (Yeast).